The following is a 531-amino-acid chain: Putative cysteine ligase BshC (531 aa).

Residues 447–481 (KAQEKKQTKGLDNLEKRLLKAEKKMHSEKLKKIIE) are a coiled coil.

Belongs to the BshC family.

The protein is Putative cysteine ligase BshC of Flavobacterium psychrophilum (strain ATCC 49511 / DSM 21280 / CIP 103535 / JIP02/86).